Here is a 251-residue protein sequence, read N- to C-terminus: Pyrroloquinoline-quinone synthase (251 aa).

It belongs to the PqqC family.

The catalysed reaction is 6-(2-amino-2-carboxyethyl)-7,8-dioxo-1,2,3,4,7,8-hexahydroquinoline-2,4-dicarboxylate + 3 O2 = pyrroloquinoline quinone + 2 H2O2 + 2 H2O + H(+). The protein operates within cofactor biosynthesis; pyrroloquinoline quinone biosynthesis. Its function is as follows. Ring cyclization and eight-electron oxidation of 3a-(2-amino-2-carboxyethyl)-4,5-dioxo-4,5,6,7,8,9-hexahydroquinoline-7,9-dicarboxylic-acid to PQQ. In Pseudomonas putida (strain ATCC 700007 / DSM 6899 / JCM 31910 / BCRC 17059 / LMG 24140 / F1), this protein is Pyrroloquinoline-quinone synthase.